Here is a 1158-residue protein sequence, read N- to C-terminus: Protein transport protein Sec31B (1158 aa).

WD repeat units lie at residues 4-47, 65-110, 119-159, 166-206, 209-254, 258-298, and 301-341; these read KELE…EIFE, VSSR…SSGK, KHTG…VPMT, NPPE…PIIK, SHSS…SPLK, SHSR…VVYK, and TQSS…WEAQ. A WD 8; interaction with SEC13 repeat occupies 376–407; the sequence is SFAFGGKLVTFGLPSIPVQPVAQACSRPVFIS. Disordered regions lie at residues 485–520, 797–843, and 968–1010; these read LKSDSKSQESPQLEAVDLKSDRAHSPCAQASKHTAK, TSSY…SSDH, and GPQD…PEPQ. Over residues 822–840 the composition is skewed to low complexity; sequence QPSSVMPFSPSQPSPSQGS.

The protein belongs to the WD repeat SEC31 family. As to quaternary structure, COPII is composed of at least 5 proteins: the SEC23/24 complex, the SEC13/31 complex and SAR1. SEC13 and SEC31 make a 2:2 tetramer that forms the edge element of the COPII outer coat. The tetramer self-assembles in multiple copies to form the complete polyhedral cage. Interacts (via WD 8) with SEC13. Interacts with SEC31A. In terms of processing, monoubiquitinated by the BCR(KLHL12) E3 ubiquitin ligase complex, leading to regulate the size of COPII coats.

It is found in the cytoplasm. The protein localises to the cytoplasmic vesicle. The protein resides in the COPII-coated vesicle membrane. It localises to the endoplasmic reticulum membrane. In terms of biological role, as a component of the coat protein complex II (COPII), may function in vesicle budding and cargo export from the endoplasmic reticulum. In Mus musculus (Mouse), this protein is Protein transport protein Sec31B (Sec31b).